A 67-amino-acid chain; its full sequence is Conotoxin ArMLCL-012 (67 aa).

A signal peptide spans 1 to 19; sequence MLCLPVFIILLLLASPAAS. Positions 20-45 are excised as a propeptide; the sequence is NPLEKRIQSDLIRAALEDADTKNDPR. Residue cysteine 64 is modified to Cysteine amide.

It belongs to the conotoxin T superfamily. Post-translationally, contains 2 disulfide bonds that can be either 'C1-C3, C2-C4' or 'C1-C4, C2-C3', since these disulfide connectivities have been observed for conotoxins with cysteine framework V (for examples, see AC P0DQQ7 and AC P81755). Expressed by the venom duct.

It localises to the secreted. The protein is Conotoxin ArMLCL-012 of Conus arenatus (Sand-dusted cone).